Consider the following 446-residue polypeptide: Trigger factor (446 aa).

The 86-residue stretch at 163-248 (GDIVTIDFKG…VRGIKRKKLA (86 aa)) folds into the PPIase FKBP-type domain. Positions 423 to 446 (SKPVPPREQGAAGETAETAEATPA) are disordered. Residues 432 to 446 (GAAGETAETAEATPA) show a composition bias toward low complexity.

Belongs to the FKBP-type PPIase family. Tig subfamily.

Its subcellular location is the cytoplasm. The enzyme catalyses [protein]-peptidylproline (omega=180) = [protein]-peptidylproline (omega=0). In terms of biological role, involved in protein export. Acts as a chaperone by maintaining the newly synthesized protein in an open conformation. Functions as a peptidyl-prolyl cis-trans isomerase. The chain is Trigger factor from Moorella thermoacetica (strain ATCC 39073 / JCM 9320).